Consider the following 122-residue polypeptide: Large ribosomal subunit protein uL14c (122 aa).

It belongs to the universal ribosomal protein uL14 family. Part of the 50S ribosomal subunit.

The protein resides in the plastid. Its subcellular location is the chloroplast. Functionally, binds to 23S rRNA. This Panax ginseng (Korean ginseng) protein is Large ribosomal subunit protein uL14c.